Here is a 99-residue protein sequence, read N- to C-terminus: Osteocalcin (99 aa).

Residues 1 to 23 (MRTLSLLTLLALTAFCLSDLAGA) form the signal peptide. The propeptide occupies 24-49 (KPSDSESDKAFMSKQEGSKVVNRLRR). The Gla domain maps to 50-96 (YLNNGLGAPAPYPDPLEPHREVCELNPNCDELADHIGFQDAYKRIYG). Position 58 is a hydroxyproline (Pro-58). Positions 66, 70, 73, and 79 each coordinate Ca(2+). 3 positions are modified to 4-carboxyglutamate: Glu-66, Glu-70, and Glu-73. The cysteines at positions 72 and 78 are disulfide-linked.

This sequence belongs to the osteocalcin/matrix Gla protein family. In terms of processing, gamma-carboxyglutamate residues are formed by vitamin K dependent carboxylation by GGCX. These residues are essential for the binding of calcium. Decarboxylation promotes the hormone activity.

It is found in the secreted. Functionally, the carboxylated form is one of the main organic components of the bone matrix, which constitutes 1-2% of the total bone protein: it acts as a negative regulator of bone formation and is required to limit bone formation without impairing bone resorption or mineralization. The carboxylated form binds strongly to apatite and calcium. In terms of biological role, the uncarboxylated form acts as a hormone secreted by osteoblasts, which regulates different cellular processes, such as energy metabolism, male fertility and brain development. Regulates of energy metabolism by acting as a hormone favoring pancreatic beta-cell proliferation, insulin secretion and sensitivity and energy expenditure. Uncarboxylated osteocalcin hormone also promotes testosterone production in the testes: acts as a ligand for G protein-coupled receptor GPRC6A at the surface of Leydig cells, initiating a signaling response that promotes the expression of enzymes required for testosterone synthesis in a CREB-dependent manner. Also acts as a regulator of brain development: osteocalcin hormone crosses the blood-brain barrier and acts as a ligand for GPR158 on neurons, initiating a signaling response that prevents neuronal apoptosis in the hippocampus, favors the synthesis of all monoamine neurotransmitters and inhibits that of gamma-aminobutyric acid (GABA). Osteocalcin also crosses the placenta during pregnancy and maternal osteocalcin is required for fetal brain development. In Rattus norvegicus (Rat), this protein is Osteocalcin (Bglap).